The sequence spans 67 residues: uncharacterized protein (67 aa).

Residues 1–28 form the signal peptide; sequence MSHVSVIAARLLVWVGILLCLGVPQLWA. N39 carries N-linked (GlcNAc...) asparagine; by host glycosylation.

This is an uncharacterized protein from Invertebrate iridescent virus 3 (IIV-3).